Consider the following 134-residue polypeptide: UPF0412 protein YaaI (134 aa).

The first 23 residues, 1 to 23 (MKSVFTLSASLAISLLLCCTAQA), serve as a signal peptide directing secretion.

Belongs to the UPF0412 family.

The chain is UPF0412 protein YaaI from Escherichia coli O7:K1 (strain IAI39 / ExPEC).